Consider the following 331-residue polypeptide: Ketol-acid reductoisomerase (NADP(+)) (331 aa).

A KARI N-terminal Rossmann domain is found at 2 to 182 (ARLYYDADAN…GGTRAGILET (181 aa)). NADP(+)-binding positions include 25-28 (YGSQ), S51, S53, and 83-86 (DEVQ). H108 is a catalytic residue. G134 is an NADP(+) binding site. The 146-residue stretch at 183-328 (TFREETETDL…KDLRAMFSWT (146 aa)) folds into the KARI C-terminal knotted domain. Residues D191, E195, E227, and E231 each coordinate Mg(2+). S252 contributes to the substrate binding site.

It belongs to the ketol-acid reductoisomerase family. Requires Mg(2+) as cofactor.

It carries out the reaction (2R)-2,3-dihydroxy-3-methylbutanoate + NADP(+) = (2S)-2-acetolactate + NADPH + H(+). It catalyses the reaction (2R,3R)-2,3-dihydroxy-3-methylpentanoate + NADP(+) = (S)-2-ethyl-2-hydroxy-3-oxobutanoate + NADPH + H(+). The protein operates within amino-acid biosynthesis; L-isoleucine biosynthesis; L-isoleucine from 2-oxobutanoate: step 2/4. It functions in the pathway amino-acid biosynthesis; L-valine biosynthesis; L-valine from pyruvate: step 2/4. In terms of biological role, involved in the biosynthesis of branched-chain amino acids (BCAA). Catalyzes an alkyl-migration followed by a ketol-acid reduction of (S)-2-acetolactate (S2AL) to yield (R)-2,3-dihydroxy-isovalerate. In the isomerase reaction, S2AL is rearranged via a Mg-dependent methyl migration to produce 3-hydroxy-3-methyl-2-ketobutyrate (HMKB). In the reductase reaction, this 2-ketoacid undergoes a metal-dependent reduction by NADPH to yield (R)-2,3-dihydroxy-isovalerate. The chain is Ketol-acid reductoisomerase (NADP(+)) from Acaryochloris marina (strain MBIC 11017).